We begin with the raw amino-acid sequence, 259 residues long: uncharacterized protein (259 aa).

This is an uncharacterized protein from Bacillus anthracis.